Here is a 168-residue protein sequence, read N- to C-terminus: ATFVGCSATRQTQLNAAASQAQTYAANALSYLNSHTSSTTRYTTWFGTFVTSRYNTVLSHFSSISSNTFSSYTFDCTCSDSGTYAFVNPSNFGYVTLCGAFWNAPVAGTDSRGGTLIHESSHFTRNGGTDDHVYGQAGAQSLARSNPAQAIDNADSHEYFAENNPALA.

Disulfide bonds link Cys6–Cys76 and Cys78–Cys98. Position 118 (His118) interacts with Zn(2+). Glu119 is a catalytic residue. Zn(2+) is bound by residues His122 and Asp131.

Requires Zn(2+) as cofactor.

Its subcellular location is the secreted. It catalyses the reaction Preferential cleavage in proteins: -Xaa-|-Lys- (in which Xaa may be Pro).. Its activity is regulated as follows. Inhibited by chelating agents such as EDTA and 1,10-phenanthroline. The chain is Peptidyl-Lys metalloendopeptidase (MEP) from Pleurotus ostreatus (Oyster mushroom).